The primary structure comprises 69 residues: Snake venom metalloproteinase BnP2 (69 aa).

The 69-residue stretch at 1–69 folds into the Peptidase M12B domain; the sequence is YIELAVVADH…EWRERDIIPR (69 aa). Glu3 contacts Ca(2+).

This sequence belongs to the venom metalloproteinase (M12B) family. P-I subfamily. In terms of assembly, monomer. Zn(2+) serves as cofactor. In terms of tissue distribution, expressed by the venom gland.

It localises to the secreted. Its activity is regulated as follows. Inhibited by EDTA. This protein is a zinc protease from snake venom that is devoid of significant myotoxic and hemorrhagic activities. It hydrolyzes the Aalpha-chain and more slowly the Bbeta-chain of fibrin and fibrinogen, without affecting the gamma-chains. It induces cell detachment and a apoptosis (anoikis) in endothelial cells. The polypeptide is Snake venom metalloproteinase BnP2 (Bothrops pauloensis (Neuwied's lancehead)).